The sequence spans 346 residues: Probable dual-specificity RNA methyltransferase RlmN (346 aa).

Glu90 (proton acceptor) is an active-site residue. The region spanning 96-330 (TRDRLTVCVS…VSVRASRGLD (235 aa)) is the Radical SAM core domain. Cys103 and Cys335 form a disulfide bridge. Residues Cys110, Cys114, and Cys117 each contribute to the [4Fe-4S] cluster site. Residues 157 to 158 (GE), Ser187, 216 to 218 (SLH), and Asn292 contribute to the S-adenosyl-L-methionine site. The S-methylcysteine intermediate role is filled by Cys335.

This sequence belongs to the radical SAM superfamily. RlmN family. It depends on [4Fe-4S] cluster as a cofactor.

The protein resides in the cytoplasm. The catalysed reaction is adenosine(2503) in 23S rRNA + 2 reduced [2Fe-2S]-[ferredoxin] + 2 S-adenosyl-L-methionine = 2-methyladenosine(2503) in 23S rRNA + 5'-deoxyadenosine + L-methionine + 2 oxidized [2Fe-2S]-[ferredoxin] + S-adenosyl-L-homocysteine. The enzyme catalyses adenosine(37) in tRNA + 2 reduced [2Fe-2S]-[ferredoxin] + 2 S-adenosyl-L-methionine = 2-methyladenosine(37) in tRNA + 5'-deoxyadenosine + L-methionine + 2 oxidized [2Fe-2S]-[ferredoxin] + S-adenosyl-L-homocysteine. Functionally, specifically methylates position 2 of adenine 2503 in 23S rRNA and position 2 of adenine 37 in tRNAs. This chain is Probable dual-specificity RNA methyltransferase RlmN, found in Synechococcus sp. (strain RCC307).